A 299-amino-acid polypeptide reads, in one-letter code: Coenzyme PQQ synthesis protein B (299 aa).

It belongs to the PqqB family.

Its pathway is cofactor biosynthesis; pyrroloquinoline quinone biosynthesis. Functionally, may be involved in the transport of PQQ or its precursor to the periplasm. The chain is Coenzyme PQQ synthesis protein B from Xanthomonas axonopodis pv. citri (strain 306).